We begin with the raw amino-acid sequence, 268 residues long: Undecaprenyl-diphosphatase (268 aa).

The next 7 membrane-spanning stretches (helical) occupy residues 5 to 25, 43 to 63, 84 to 104, 107 to 127, 184 to 204, 214 to 234, and 247 to 267; these read TIAQALMLGVLEGFTEFIPVS, GKAFEILIQLGAILAVLSVYA, LGILIAFLPAAIIGVVAYQII, VLFETPLLICTMLILGGIVLL, AAEFSFFLAMPTMAGAFAYDL, ADLQIIGVGFIAAFVAAVLVV, and ALFGWWRIFIGVLGLIGVLVL.

This sequence belongs to the UppP family.

Its subcellular location is the cell inner membrane. It carries out the reaction di-trans,octa-cis-undecaprenyl diphosphate + H2O = di-trans,octa-cis-undecaprenyl phosphate + phosphate + H(+). In terms of biological role, catalyzes the dephosphorylation of undecaprenyl diphosphate (UPP). Confers resistance to bacitracin. This is Undecaprenyl-diphosphatase from Chelativorans sp. (strain BNC1).